The chain runs to 524 residues: Glucose-6-phosphate isomerase (524 aa).

The active-site Proton donor is the Glu-322. Active-site residues include His-351 and Lys-453.

Belongs to the GPI family.

It localises to the cytoplasm. It catalyses the reaction alpha-D-glucose 6-phosphate = beta-D-fructose 6-phosphate. It functions in the pathway carbohydrate biosynthesis; gluconeogenesis. Its pathway is carbohydrate degradation; glycolysis; D-glyceraldehyde 3-phosphate and glycerone phosphate from D-glucose: step 2/4. Functionally, catalyzes the reversible isomerization of glucose-6-phosphate to fructose-6-phosphate. The protein is Glucose-6-phosphate isomerase of Prochlorococcus marinus (strain NATL2A).